Consider the following 775-residue polypeptide: Major facilitator superfamily domain-containing protein 6 (775 aa).

At Thr11 the chain carries Phosphothreonine. The tract at residues Asn28–Thr47 is disordered. The segment covering Ser38–Thr47 has biased composition (low complexity). 12 helical membrane-spanning segments follow: residues Val74–Tyr94, Leu106–Ala126, Lys133–Val153, Ala289–Val309, Trp338–Ile358, Gln372–Phe392, Val453–Trp473, Thr482–Phe502, Ile510–Ile530, Gly547–Pro567, Leu582–Ala602, and Gly608–Val628.

The protein belongs to the major facilitator superfamily. MFSD6 family.

The protein resides in the membrane. Functionally, MHC class I receptor. Binds only to H-2 class I histocompatibility antigen, K-D alpha chain (H-2K(D)). In Mus musculus (Mouse), this protein is Major facilitator superfamily domain-containing protein 6 (Mfsd6).